A 414-amino-acid polypeptide reads, in one-letter code: Chaperone protein dnaJ 39 (414 aa).

A compositionally biased stretch (basic and acidic residues) spans 1–24 (MATHSSRSENKDAGEEDELRRRNP). The disordered stretch occupies residues 1–36 (MATHSSRSENKDAGEEDELRRRNPYEVLGIPSNSTD). Residues 23 to 88 (NPYEVLGIPS…ENRRLYDTTG (66 aa)) form the J domain. Residues 296–324 (EKESLRSTEAQIVSKRTELLKFEAEYHEV) are a coiled coil. The tract at residues 362-395 (TKQGSSKSRSWSKKKSSLLMEPREEGEVAVREEG) is disordered. The span at 382 to 395 (EPREEGEVAVREEG) shows a compositional bias: basic and acidic residues.

It belongs to the DnaJ family. C/III subfamily. In terms of tissue distribution, expressed constitutively at low levels in seedlings, roots, leaves, stems, flowers and siliques.

It is found in the membrane. Its function is as follows. Plays a continuous role in plant development probably in the structural organization of compartments. Seems to be involved in early gravitropic signal transduction within the gravity-perceiving cells (statocytes). The polypeptide is Chaperone protein dnaJ 39 (ATJ39) (Arabidopsis thaliana (Mouse-ear cress)).